Reading from the N-terminus, the 356-residue chain is Nicotinate-nucleotide--dimethylbenzimidazole phosphoribosyltransferase (356 aa).

Glu-317 (proton acceptor) is an active-site residue.

It belongs to the CobT family. In terms of assembly, homodimer.

The enzyme catalyses 5,6-dimethylbenzimidazole + nicotinate beta-D-ribonucleotide = alpha-ribazole 5'-phosphate + nicotinate + H(+). It functions in the pathway nucleoside biosynthesis; alpha-ribazole biosynthesis; alpha-ribazole from 5,6-dimethylbenzimidazole: step 1/2. Its function is as follows. Catalyzes the synthesis of alpha-ribazole-5'-phosphate from nicotinate mononucleotide (NAMN) and 5,6-dimethylbenzimidazole (DMB). The polypeptide is Nicotinate-nucleotide--dimethylbenzimidazole phosphoribosyltransferase (Salmonella paratyphi A (strain ATCC 9150 / SARB42)).